The chain runs to 289 residues: Glucosamine-6-phosphate deaminase 1 (289 aa).

The residue at position 64 (Lys-64) is an N6-acetyllysine. The active-site Proton acceptor; for enolization step is Asp-72. Asp-141 (for ring-opening step) is an active-site residue. His-143 functions as the Proton acceptor; for ring-opening step in the catalytic mechanism. The For ring-opening step role is filled by Glu-148. A Phosphothreonine modification is found at Thr-161.

The protein belongs to the glucosamine/galactosamine-6-phosphate isomerase family. In terms of assembly, homohexamer.

The protein resides in the cytoplasm. The enzyme catalyses alpha-D-glucosamine 6-phosphate + H2O = beta-D-fructose 6-phosphate + NH4(+). It functions in the pathway nucleotide-sugar biosynthesis; UDP-N-acetyl-alpha-D-glucosamine biosynthesis; alpha-D-glucosamine 6-phosphate from D-fructose 6-phosphate: step 1/1. Allosterically activated by N-acetylglucosamine-6-phosphate (GlcNAc6P). Catalyzes the reversible conversion of alpha-D-glucosamine 6-phosphate (GlcN-6P) into beta-D-fructose 6-phosphate (Fru-6P) and ammonium ion, a regulatory reaction step in de novo uridine diphosphate-N-acetyl-alpha-D-glucosamine (UDP-GlcNAc) biosynthesis via hexosamine pathway. Deamination is coupled to aldo-keto isomerization mediating the metabolic flux from UDP-GlcNAc toward Fru-6P. At high ammonium level can drive amination and isomerization of Fru-6P toward hexosamines and UDP-GlcNAc synthesis. Has a role in fine tuning the metabolic fluctuations of cytosolic UDP-GlcNAc and their effects on hyaluronan synthesis that occur during tissue remodeling. Seems to trigger calcium oscillations in mammalian eggs. These oscillations serve as the essential trigger for egg activation and early development of the embryo. This chain is Glucosamine-6-phosphate deaminase 1, found in Homo sapiens (Human).